The sequence spans 380 residues: Acetylornithine deacetylase (380 aa).

Position 79 (His-79) interacts with Zn(2+). Residue Asp-81 is part of the active site. Asp-109 provides a ligand contact to Zn(2+). Glu-139 is a catalytic residue. 3 residues coordinate Zn(2+): Glu-140, Glu-164, and His-351.

It belongs to the peptidase M20A family. ArgE subfamily. Homodimer. The cofactor is Zn(2+). Requires Co(2+) as cofactor. Glutathione serves as cofactor.

The protein localises to the cytoplasm. It catalyses the reaction N(2)-acetyl-L-ornithine + H2O = L-ornithine + acetate. It functions in the pathway amino-acid biosynthesis; L-arginine biosynthesis; L-ornithine from N(2)-acetyl-L-ornithine (linear): step 1/1. In terms of biological role, catalyzes the hydrolysis of the amide bond of N(2)-acetylated L-amino acids. Cleaves the acetyl group from N-acetyl-L-ornithine to form L-ornithine, an intermediate in L-arginine biosynthesis pathway, and a branchpoint in the synthesis of polyamines. This is Acetylornithine deacetylase from Myxococcus xanthus.